Consider the following 263-residue polypeptide: Cytochrome c oxidase subunit 3 (263 aa).

Helical transmembrane passes span 7–27 (ITVL…KAHL), 44–64 (FSVG…VYSI), 78–98 (GMLS…WGIL), 120–140 (LILT…CLQF), 145–165 (GMSL…ECFA), 191–211 (VTGL…IYFI), and 241–261 (ITIL…YFFY).

Belongs to the cytochrome c oxidase subunit 3 family. Component of the cytochrome c oxidase (complex IV, CIV), a multisubunit enzyme composed of a catalytic core of 3 subunits and several supernumerary subunits. The complex exists as a monomer or a dimer and forms supercomplexes (SCs) in the inner mitochondrial membrane with ubiquinol-cytochrome c oxidoreductase (cytochrome b-c1 complex, complex III, CIII).

It localises to the mitochondrion inner membrane. It carries out the reaction 4 Fe(II)-[cytochrome c] + O2 + 8 H(+)(in) = 4 Fe(III)-[cytochrome c] + 2 H2O + 4 H(+)(out). Its function is as follows. Component of the cytochrome c oxidase, the last enzyme in the mitochondrial electron transport chain which drives oxidative phosphorylation. The respiratory chain contains 3 multisubunit complexes succinate dehydrogenase (complex II, CII), ubiquinol-cytochrome c oxidoreductase (cytochrome b-c1 complex, complex III, CIII) and cytochrome c oxidase (complex IV, CIV), that cooperate to transfer electrons derived from NADH and succinate to molecular oxygen, creating an electrochemical gradient over the inner membrane that drives transmembrane transport and the ATP synthase. Cytochrome c oxidase is the component of the respiratory chain that catalyzes the reduction of oxygen to water. Electrons originating from reduced cytochrome c in the intermembrane space (IMS) are transferred via the dinuclear copper A center (CU(A)) of subunit 2 and heme A of subunit 1 to the active site in subunit 1, a binuclear center (BNC) formed by heme A3 and copper B (CU(B)). The BNC reduces molecular oxygen to 2 water molecules using 4 electrons from cytochrome c in the IMS and 4 protons from the mitochondrial matrix. This Plasmodium vivax protein is Cytochrome c oxidase subunit 3 (COIII).